The primary structure comprises 236 residues: Uridylate kinase (236 aa).

An ATP-binding site is contributed by 12 to 15 (KLSG). Positions 20–25 (GEKGFG) are involved in allosteric activation by GTP. G54 lines the UMP pocket. ATP contacts are provided by G55 and R59. Residues D72 and 133-140 (TGNPYFST) each bind UMP. Residues N161, Y166, and D169 each contribute to the ATP site.

The protein belongs to the UMP kinase family. In terms of assembly, homohexamer.

It localises to the cytoplasm. The catalysed reaction is UMP + ATP = UDP + ADP. The protein operates within pyrimidine metabolism; CTP biosynthesis via de novo pathway; UDP from UMP (UMPK route): step 1/1. Allosterically activated by GTP. Inhibited by UTP. In terms of biological role, catalyzes the reversible phosphorylation of UMP to UDP. This chain is Uridylate kinase, found in Alkaliphilus oremlandii (strain OhILAs) (Clostridium oremlandii (strain OhILAs)).